Reading from the N-terminus, the 1108-residue chain is Valine--tRNA ligase, mitochondrial 1 (1108 aa).

A mitochondrion-targeting transit peptide spans 1 to 46 (MSLLFLRRAKPLFVSCCSATHSRSSFLSPTLTNQLVRSFHGSRTMS). Positions 57-93 (ELERKKKKEEKAKEKELKKQKALEKERLAELKAKQAK) are enriched in basic and acidic residues. The segment at 57-138 (ELERKKKKEE…RKRLSSQMAK (82 aa)) is disordered. Residues 177–187 (PNVTGALHIGH) carry the 'HIGH' region motif. The 'KMSKS' region signature appears at 695-699 (KMSKS). K698 provides a ligand contact to ATP. Residues 1032–1064 (AINTEAEQEKIRNKIGELQKQKEKLQKMMSVST) adopt a coiled-coil conformation.

This sequence belongs to the class-I aminoacyl-tRNA synthetase family.

Its subcellular location is the mitochondrion. It is found in the cytoplasm. The protein localises to the cytosol. It carries out the reaction tRNA(Val) + L-valine + ATP = L-valyl-tRNA(Val) + AMP + diphosphate. In terms of biological role, required for embryo development and seed viability. This chain is Valine--tRNA ligase, mitochondrial 1, found in Arabidopsis thaliana (Mouse-ear cress).